The sequence spans 398 residues: Nuclear egress protein 2 (398 aa).

At 1-359 (MEMNKVLHQD…GPSRPQSGPW (359 aa)) the chain is on the perinuclear space side. Disordered stretches follow at residues 202-246 (ALTR…PPPP) and 306-334 (LEEH…SLER). Pro residues predominate over residues 215–224 (ASPPPPPPRH). S216 carries the phosphoserine modification. Residues 225-240 (PSCSPTMVAAGGAAAG) show a composition bias toward low complexity. Over residues 311 to 323 (SRRRGVSTHHRHP) the composition is skewed to basic residues. The chain crosses the membrane as a helical span at residues 360–382 (LPARFATLGPLVLALLLVLALLW). Residues 383 to 398 (RGHGQSSSPTRSAHRD) are Nuclear-facing.

Belongs to the herpesviridae NEC2 protein family. In terms of assembly, forms a heterohexameric complex with NEC1. Interacts with host UBA7 and RNF170; this interaction promotes UBA7 proteasomal degradation. In terms of processing, phosphorylated. Phosphorylation by viral kinase UL97 at Ser-216 plays an important role for correct viral nuclear egress complex (NEC) localization.

Its subcellular location is the host nucleus inner membrane. In terms of biological role, plays an essential role in virion nuclear egress, the first step of virion release from infected cell. Within the host nucleus, NEC1 interacts with the newly formed capsid through the vertexes and directs it to the inner nuclear membrane by associating with NEC2. Induces the budding of the capsid at the inner nuclear membrane as well as its envelopment into the perinuclear space. There, the NEC1/NEC2 complex promotes the fusion of the enveloped capsid with the outer nuclear membrane and the subsequent release of the viral capsid into the cytoplasm where it will reach the secondary budding sites in the host Golgi or trans-Golgi network. Inhibits host ISGylation and subsequent innate antiviral response by targeting host UBA7 for proteasomal degradation. The chain is Nuclear egress protein 2 from Homo sapiens (Human).